The primary structure comprises 463 residues: Probable glycosyltransferase 3 (463 aa).

The Cytoplasmic segment spans residues 1–24 (MAVTGGGRPAVRQQAARGKQMQRT). Residues 25 to 47 (FNNVKITLICGFITLLVLRGTVG) traverse the membrane as a helical; Signal-anchor for type II membrane protein segment. Residues 48 to 463 (INLLTYGVGG…ALKMDAKIES (416 aa)) are Lumenal-facing. The segment at 82–125 (EIRSDTDDDDDDEEEEPLGVDASTTTTTNSTTTTATAARRRSSN) is disordered. Over residues 87-99 (TDDDDDDEEEEPL) the composition is skewed to acidic residues. Positions 103 to 118 (ASTTTTTNSTTTTATA) are enriched in low complexity. Residues N110, N125, and N442 are each glycosylated (N-linked (GlcNAc...) asparagine).

Belongs to the glycosyltransferase 34 family.

The protein resides in the golgi apparatus membrane. Probable glycosyltransferase that may be involved in the biosynthesis of xyloglucan. The sequence is that of Probable glycosyltransferase 3 from Oryza sativa subsp. japonica (Rice).